The chain runs to 328 residues: MKNQWNNILSIGEKVLNGEKITADEALTLSKSNGSDIFLLCSFANKLREKFNGNHVDLCSVINAKSGNCSEDCAFCAQSAHHKANVSCYPLLNEDKILEMAKQREAYGARHCDIATSGLGYTGDEKDFQTILKAFKKMKENTNLKLCACLGTLTEKAMNSLAAVGVERYNHNLETAKSFYKNIVSTHGYDERIKTINYAKNAKMEVCSGMIVGLGETMEQRIEHALLLRDLNVDAVPVNILNPVKGTKLENAKPLSPMEIIKTFAIIRFILPDKIIRYAGGREKNLRSLQPLGFLSGLNGMLIGNYLTTNGQSVNDDFNMLKDLELEY.

Residues Phe-51–Arg-282 enclose the Radical SAM core domain. [4Fe-4S] cluster contacts are provided by Cys-69, Cys-73, and Cys-76. [2Fe-2S] cluster is bound by residues Cys-112, Cys-147, Cys-207, and Arg-277.

The protein belongs to the radical SAM superfamily. Biotin synthase family. As to quaternary structure, homodimer. Requires [4Fe-4S] cluster as cofactor. [2Fe-2S] cluster is required as a cofactor.

The catalysed reaction is (4R,5S)-dethiobiotin + (sulfur carrier)-SH + 2 reduced [2Fe-2S]-[ferredoxin] + 2 S-adenosyl-L-methionine = (sulfur carrier)-H + biotin + 2 5'-deoxyadenosine + 2 L-methionine + 2 oxidized [2Fe-2S]-[ferredoxin]. It participates in cofactor biosynthesis; biotin biosynthesis; biotin from 7,8-diaminononanoate: step 2/2. Functionally, catalyzes the conversion of dethiobiotin (DTB) to biotin by the insertion of a sulfur atom into dethiobiotin via a radical-based mechanism. The sequence is that of Biotin synthase from Clostridium acetobutylicum (strain ATCC 824 / DSM 792 / JCM 1419 / IAM 19013 / LMG 5710 / NBRC 13948 / NRRL B-527 / VKM B-1787 / 2291 / W).